Here is a 264-residue protein sequence, read N- to C-terminus: MHKLKLHGFNNLTKSLSFCIYDICYAKTADDRAGYIAYIDEQYNANRLTEILSETCSIIGANILNIARQDYEPQGASVTILVSEEPVDPNDVDTSEHPGPLSKTVVAHLDKSHICVHTYPESHPEGGLCTFRADIEVSTCGVISPLKALNYLIHQLESDIVTMDYRVRGFTRDVNGVKHYIDHEINSIQNFMSDDMKALYHMMDVNVYQENIFHTKMLLKDFDLKHYLFNAKPDALSAAERKEITDLLWKEMQEIYYGRNIPHL.

Ser-112 serves as the catalytic Schiff-base intermediate with substrate; via pyruvic acid. Residue Ser-112 is modified to Pyruvic acid (Ser); by autocatalysis. His-117 acts as the Proton acceptor; for processing activity in catalysis. Cys-140 (proton donor; for catalytic activity) is an active-site residue.

It belongs to the prokaryotic AdoMetDC family. Type 2 subfamily. As to quaternary structure, heterooctamer of four alpha and four beta chains arranged as a tetramer of alpha/beta heterodimers. The cofactor is pyruvate. Post-translationally, is synthesized initially as an inactive proenzyme. Formation of the active enzyme involves a self-maturation process in which the active site pyruvoyl group is generated from an internal serine residue via an autocatalytic post-translational modification. Two non-identical subunits are generated from the proenzyme in this reaction, and the pyruvate is formed at the N-terminus of the alpha chain, which is derived from the carboxyl end of the proenzyme. The post-translation cleavage follows an unusual pathway, termed non-hydrolytic serinolysis, in which the side chain hydroxyl group of the serine supplies its oxygen atom to form the C-terminus of the beta chain, while the remainder of the serine residue undergoes an oxidative deamination to produce ammonia and the pyruvoyl group blocking the N-terminus of the alpha chain.

The enzyme catalyses S-adenosyl-L-methionine + H(+) = S-adenosyl 3-(methylsulfanyl)propylamine + CO2. The protein operates within amine and polyamine biosynthesis; S-adenosylmethioninamine biosynthesis; S-adenosylmethioninamine from S-adenosyl-L-methionine: step 1/1. Functionally, catalyzes the decarboxylation of S-adenosylmethionine to S-adenosylmethioninamine (dcAdoMet), the propylamine donor required for the synthesis of the polyamines spermine and spermidine from the diamine putrescine. The chain is S-adenosylmethionine decarboxylase proenzyme from Serratia proteamaculans (strain 568).